The sequence spans 123 residues: MHYCNKDIGSFGETIAADYIKNSGYIILERNFRCKLGEIDIIAKDKNFIVFIEVKTRYGYIYGSPSEAINFRKQNKIYKTAQLYIIKKAIHNKFYFRFDVIEVILNTLNSNYSIKLIKNAFQI.

Belongs to the UPF0102 family.

The protein is UPF0102 protein CLJ_B2665 of Clostridium botulinum (strain 657 / Type Ba4).